A 455-amino-acid polypeptide reads, in one-letter code: UDP-N-acetylmuramoylalanine--D-glutamate ligase (455 aa).

Position 120-126 (120-126 (GSNGKTT)) interacts with ATP.

The protein belongs to the MurCDEF family.

It is found in the cytoplasm. It carries out the reaction UDP-N-acetyl-alpha-D-muramoyl-L-alanine + D-glutamate + ATP = UDP-N-acetyl-alpha-D-muramoyl-L-alanyl-D-glutamate + ADP + phosphate + H(+). The protein operates within cell wall biogenesis; peptidoglycan biosynthesis. Its function is as follows. Cell wall formation. Catalyzes the addition of glutamate to the nucleotide precursor UDP-N-acetylmuramoyl-L-alanine (UMA). The chain is UDP-N-acetylmuramoylalanine--D-glutamate ligase from Pediococcus pentosaceus (strain ATCC 25745 / CCUG 21536 / LMG 10740 / 183-1w).